The following is a 580-amino-acid chain: Alpha-glucosidase (580 aa).

Residues 1-19 form the signal peptide; the sequence is MRPLGALSLFALLATTVSG. 2 N-linked (GlcNAc...) asparagine glycosylation sites follow: N102 and N127. Residue D224 is the Nucleophile of the active site. Catalysis depends on E290, which acts as the Proton donor. N501 is a glycosylation site (N-linked (GlcNAc...) asparagine). A helical membrane pass occupies residues 560–580; the sequence is AAAINLSIGLLLAIMARYIFV.

The protein belongs to the glycosyl hydrolase 13 family. In terms of assembly, (Microbial infection) Binds to L.sphaericus BinB subunit of the binary toxin BinAB. As to expression, in 4th-instar larvae produced in the brush border membranes of the gastric caeca and the posterior stomach cells (at protein level).

It localises to the membrane. It carries out the reaction Hydrolysis of terminal, non-reducing (1-&gt;4)-linked alpha-D-glucose residues with release of alpha-D-glucose.. Functionally, probably an alpha-glucosidase, it has no alpha-amylase function. In terms of biological role, (Microbial infection) Serves as the larval receptor for Lysinibacillus sphaericus BinB toxin. The chain is Alpha-glucosidase from Culex pipiens (House mosquito).